We begin with the raw amino-acid sequence, 93 residues long: Small ribosomal subunit protein uS19 (93 aa).

This sequence belongs to the universal ribosomal protein uS19 family.

Its function is as follows. Protein S19 forms a complex with S13 that binds strongly to the 16S ribosomal RNA. The polypeptide is Small ribosomal subunit protein uS19 (Maridesulfovibrio salexigens (strain ATCC 14822 / DSM 2638 / NCIMB 8403 / VKM B-1763) (Desulfovibrio salexigens)).